The sequence spans 475 residues: Transmembrane protein 181 (475 aa).

Helical transmembrane passes span 16–36, 131–151, 175–195, 214–234, 245–265, 276–296, 320–340, 356–376, and 401–421; these read HFVL…FVGI, EIIV…IVGF, LEIW…CLFA, SVLL…SFLV, LFQS…YHGI, FYLP…TLGI, MKVF…FLIV, LKFL…ILYL, and FLSF…VYSP. Ser-443 carries the phosphoserine modification.

Belongs to the TMEM181 family. In terms of assembly, interacts with cytolethal distending toxin.

The protein resides in the membrane. Functionally, mediates action of cytolethal distending toxins (CDT), which are secreted by many pathogenic bacteria. Expression level of TMEM181 is rate-limiting for intoxication. The polypeptide is Transmembrane protein 181 (TMEM181) (Homo sapiens (Human)).